The sequence spans 692 residues: Proprotein convertase subtilisin/kexin type 9 (692 aa).

The N-terminal stretch at 1-30 is a signal peptide; it reads MGTVSSRRSWWPLPLPLLLLLLLGPAGARA. The propeptide occupies 31 to 152; it reads QEDEDGDYEE…IEEDSSVFAQ (122 aa). Tyrosine 38 carries the post-translational modification Sulfotyrosine. The residue at position 47 (serine 47) is a Phosphoserine. The 73-residue stretch at 77-149 folds into the Inhibitor I9 domain; the sequence is TYVVVLKEET…VDYIEEDSSV (73 aa). Residues 155-444 enclose the Peptidase S8 domain; sequence PWNLERITPA…VLTPNLVAAL (290 aa). Residues aspartate 186 and histidine 226 each act as charge relay system in the active site. Intrachain disulfides connect cysteine 223–cysteine 255 and cysteine 323–cysteine 358. The active-site Charge relay system is serine 386. The tract at residues 450–692 is C-terminal domain; it reads RAGWQLFCRT…HLVQASQELQ (243 aa). Intrachain disulfides connect cysteine 457–cysteine 527, cysteine 477–cysteine 526, and cysteine 486–cysteine 509. Asparagine 533 carries N-linked (GlcNAc...) asparagine glycosylation. Disulfide bonds link cysteine 534–cysteine 601, cysteine 552–cysteine 600, cysteine 562–cysteine 588, cysteine 608–cysteine 679, cysteine 626–cysteine 678, and cysteine 635–cysteine 654. Residue serine 688 is modified to Phosphoserine.

This sequence belongs to the peptidase S8 family. As to quaternary structure, monomer. Can self-associate to form dimers and higher multimers which may have increased LDLR degrading activity. The precursor protein but not the mature protein may form multimers. Interacts with APOB, VLDLR, LRP8/APOER2 and BACE1. The full-length immature form (pro-PCSK9) interacts with SCNN1A, SCNN1B and SCNN1G. The pro-PCSK9 form (via C-terminal domain) interacts with LDLR. Interacts (via the C-terminal domain) with ANXA2 (via repeat Annexin 1); the interaction inhibits the degradation of LDLR. Ca(2+) serves as cofactor. Post-translationally, cleavage by furin and PCSK5 generates a truncated inactive protein that is unable to induce LDLR degradation. Undergoes autocatalytic cleavage in the endoplasmic reticulum to release the propeptide from the N-terminus and the cleavage of the propeptide is strictly required for its maturation and activation. The cleaved propeptide however remains associated with the catalytic domain through non-covalent interactions, preventing potential substrates from accessing its active site. As a result, it is secreted from cells as a propeptide-containing, enzymatically inactive protein. In terms of processing, phosphorylation protects the propeptide against proteolysis.

The protein resides in the cytoplasm. It localises to the secreted. It is found in the endosome. The protein localises to the lysosome. Its subcellular location is the cell surface. The protein resides in the endoplasmic reticulum. It localises to the golgi apparatus. With respect to regulation, its proteolytic activity is autoinhibited by the non-covalent binding of the propeptide to the catalytic domain. Inhibited by EGTA. Functionally, crucial player in the regulation of plasma cholesterol homeostasis. Binds to low-density lipid receptor family members: low density lipoprotein receptor (LDLR), very low density lipoprotein receptor (VLDLR), apolipoprotein E receptor (LRP1/APOER) and apolipoprotein receptor 2 (LRP8/APOER2), and promotes their degradation in intracellular acidic compartments. Acts via a non-proteolytic mechanism to enhance the degradation of the hepatic LDLR through a clathrin LDLRAP1/ARH-mediated pathway. May prevent the recycling of LDLR from endosomes to the cell surface or direct it to lysosomes for degradation. Can induce ubiquitination of LDLR leading to its subsequent degradation. Inhibits intracellular degradation of APOB via the autophagosome/lysosome pathway in a LDLR-independent manner. Involved in the disposal of non-acetylated intermediates of BACE1 in the early secretory pathway. Inhibits epithelial Na(+) channel (ENaC)-mediated Na(+) absorption by reducing ENaC surface expression primarily by increasing its proteasomal degradation. Regulates neuronal apoptosis via modulation of LRP8/APOER2 levels and related anti-apoptotic signaling pathways. The sequence is that of Proprotein convertase subtilisin/kexin type 9 (PCSK9) from Macaca mulatta (Rhesus macaque).